The primary structure comprises 569 residues: Glycylpeptide N-tetradecanoyltransferase (569 aa).

The segment covering 1 to 18 has biased composition (basic and acidic residues); the sequence is MPPTEESKPVDPAQEKQA. Residues 1–82 are disordered; sequence MPPTEESKPV…STESSAEVGL (82 aa). Over residues 55 to 68 the composition is skewed to basic residues; it reads TKKKNKKKSKKKNK. Residues 158-161, 291-293, and 299-303 each bind tetradecanoyl-CoA; these read YKFW, LCI, and GKRLA. Residue valine 569 is the Proton acceptor; via carboxylate of the active site.

Belongs to the NMT family. Monomer.

Its subcellular location is the cytoplasm. The catalysed reaction is N-terminal glycyl-[protein] + tetradecanoyl-CoA = N-tetradecanoylglycyl-[protein] + CoA + H(+). Functionally, adds a myristoyl group to the N-terminal glycine residue of certain cellular proteins. The sequence is that of Glycylpeptide N-tetradecanoyltransferase (gtt-1) from Neurospora crassa (strain ATCC 24698 / 74-OR23-1A / CBS 708.71 / DSM 1257 / FGSC 987).